The following is a 90-amino-acid chain: Small ribosomal subunit protein bS16 (90 aa).

This sequence belongs to the bacterial ribosomal protein bS16 family.

This chain is Small ribosomal subunit protein bS16, found in Streptococcus thermophilus (strain CNRZ 1066).